Consider the following 431-residue polypeptide: STE20-related kinase adapter protein alpha (431 aa).

Ser-2 and Ser-46 each carry phosphoserine. The Protein kinase domain maps to 69 to 379 (YELLTVIGKG…ASTLLNHSFF (311 aa)). Residues 310 to 347 (LTMSPSRSVANSGLSDSLTTSTPRPSNGDSPSHPYHRT) form a disordered region. Positions 312–339 (MSPSRSVANSGLSDSLTTSTPRPSNGDS) are enriched in polar residues. Thr-329 and Thr-401 each carry phosphothreonine; by LKB1. Thr-419 is subject to Phosphothreonine.

The protein belongs to the protein kinase superfamily. STE Ser/Thr protein kinase family. STE20 subfamily. Component of a trimeric complex composed of STK11/LKB1, STRAD (STRADA or STRADB) and CAB39/MO25 (CAB39/MO25alpha or CAB39L/MO25beta): the complex tethers STK11/LKB1 in the cytoplasm and stimulates its catalytic activity.

The protein resides in the nucleus. Its subcellular location is the cytoplasm. Its function is as follows. Pseudokinase which, in complex with CAB39/MO25 (CAB39/MO25alpha or CAB39L/MO25beta), binds to and activates STK11/LKB1. Adopts a closed conformation typical of active protein kinases and binds STK11/LKB1 as a pseudosubstrate, promoting conformational change of STK11/LKB1 in an active conformation. This chain is STE20-related kinase adapter protein alpha (STRADA), found in Pongo abelii (Sumatran orangutan).